Here is a 209-residue protein sequence, read N- to C-terminus: Large ribosomal subunit protein uL3 (209 aa).

The interval 121–154 is disordered; that stretch reads GGIKRHNFHRGPMAHGSKYHRRPGSSAAKGPART.

It belongs to the universal ribosomal protein uL3 family. In terms of assembly, part of the 50S ribosomal subunit. Forms a cluster with proteins L14 and L19.

Functionally, one of the primary rRNA binding proteins, it binds directly near the 3'-end of the 23S rRNA, where it nucleates assembly of the 50S subunit. In Desulforamulus reducens (strain ATCC BAA-1160 / DSM 100696 / MI-1) (Desulfotomaculum reducens), this protein is Large ribosomal subunit protein uL3.